The primary structure comprises 78 residues: Large ribosomal subunit protein bL28 (78 aa).

Residues 1–21 (MSRVCQVTGKKPMVGNNRSHA) form a disordered region.

Belongs to the bacterial ribosomal protein bL28 family.

The chain is Large ribosomal subunit protein bL28 from Shewanella baltica (strain OS223).